Here is a 332-residue protein sequence, read N- to C-terminus: Putative ketol-acid reductoisomerase 3 (332 aa).

The KARI N-terminal Rossmann domain occupies 1-182; that stretch reads MDKTVLDASL…AIPGGIAVIS (182 aa). In terms of domain architecture, KARI C-terminal knotted spans 183-329; it reads SFEEEALLDL…KELYKILRRK (147 aa).

This sequence belongs to the ketol-acid reductoisomerase family.

It catalyses the reaction (2R)-2,3-dihydroxy-3-methylbutanoate + NADP(+) = (2S)-2-acetolactate + NADPH + H(+). The enzyme catalyses (2R,3R)-2,3-dihydroxy-3-methylpentanoate + NADP(+) = (S)-2-ethyl-2-hydroxy-3-oxobutanoate + NADPH + H(+). It functions in the pathway amino-acid biosynthesis; L-isoleucine biosynthesis; L-isoleucine from 2-oxobutanoate: step 2/4. Its pathway is amino-acid biosynthesis; L-valine biosynthesis; L-valine from pyruvate: step 2/4. This Saccharolobus solfataricus (strain ATCC 35092 / DSM 1617 / JCM 11322 / P2) (Sulfolobus solfataricus) protein is Putative ketol-acid reductoisomerase 3 (ilvC3).